The chain runs to 333 residues: Minor fimbrium tip subunit MfA4 (333 aa).

An N-terminal signal peptide occupies residues 1 to 18; it reads MKKYLLYASLLTSVLLFS. C19 is lipidated: N-palmitoyl cysteine. Residue C19 is the site of S-diacylglycerol cysteine attachment. Positions 19-53 are excised as a propeptide; it reads CSKNNPSEPVEDRSIEISIRVDDFTKTGETVRYER.

It belongs to the bacteroidetes fimbrillin superfamily. FimA/Mfa1 family. As to quaternary structure, component of the fimbrium tip. Minor fimbriae are composed of a structural subunit, most often Mfa1, and the accessory subunits Mfa3, Mfa4 and Mfa5. Mfa4 is required for Mfa3 and Mfa5 insertion into the fimbrium. Fimbrium assembly occurs by linear, head-to-tail oligomerization of fimbrial subunits. This is mediated via insertion of a C-terminal beta-strand from one subunit into a groove in the N-terminal domain of the following subunit.

Its subcellular location is the fimbrium. It is found in the cell outer membrane. Functionally, tip subunit of the minor fimbriae. These filamentous pili are attached to the cell surface; they mediate biofilm formation, adhesion onto host cells and onto other bacteria that are part of the oral microbiome. They play an important role in invasion of periodontal tissues and are recognized as major virulence factors. The chain is Minor fimbrium tip subunit MfA4 from Porphyromonas gingivalis (strain ATCC 33277 / DSM 20709 / CIP 103683 / JCM 12257 / NCTC 11834 / 2561).